The sequence spans 141 residues: ATP synthase epsilon chain (141 aa).

This sequence belongs to the ATPase epsilon chain family. As to quaternary structure, F-type ATPases have 2 components, CF(1) - the catalytic core - and CF(0) - the membrane proton channel. CF(1) has five subunits: alpha(3), beta(3), gamma(1), delta(1), epsilon(1). CF(0) has three main subunits: a, b and c.

The protein resides in the cell inner membrane. Functionally, produces ATP from ADP in the presence of a proton gradient across the membrane. This is ATP synthase epsilon chain from Pseudomonas savastanoi pv. phaseolicola (strain 1448A / Race 6) (Pseudomonas syringae pv. phaseolicola (strain 1448A / Race 6)).